A 113-amino-acid chain; its full sequence is Nucleoid-associated protein SYNW0027 (113 aa).

It belongs to the YbaB/EbfC family. In terms of assembly, homodimer.

The protein localises to the cytoplasm. It is found in the nucleoid. Its function is as follows. Binds to DNA and alters its conformation. May be involved in regulation of gene expression, nucleoid organization and DNA protection. In Parasynechococcus marenigrum (strain WH8102), this protein is Nucleoid-associated protein SYNW0027.